A 455-amino-acid chain; its full sequence is Gamma-glutamyl phosphate reductase (455 aa).

It belongs to the gamma-glutamyl phosphate reductase family.

The protein localises to the cytoplasm. It carries out the reaction L-glutamate 5-semialdehyde + phosphate + NADP(+) = L-glutamyl 5-phosphate + NADPH + H(+). The protein operates within amino-acid biosynthesis; L-proline biosynthesis; L-glutamate 5-semialdehyde from L-glutamate: step 2/2. In terms of biological role, catalyzes the NADPH-dependent reduction of L-glutamate 5-phosphate into L-glutamate 5-semialdehyde and phosphate. The product spontaneously undergoes cyclization to form 1-pyrroline-5-carboxylate. The sequence is that of Gamma-glutamyl phosphate reductase from Synechococcus sp. (strain JA-3-3Ab) (Cyanobacteria bacterium Yellowstone A-Prime).